Reading from the N-terminus, the 117-residue chain is Minor capsid protein p17 (117 aa).

A glycan (N-linked (GlcNAc...) asparagine; by host) is linked at asparagine 12. The chain crosses the membrane as a helical span at residues 39–59; the sequence is AILLGILILLVIILIIVAIVY. Positions 96–117 are disordered; it reads KNSTSQQSHIPSDEQLAELAHS. An N-linked (GlcNAc...) asparagine; by host glycan is attached at asparagine 97.

It belongs to the asfivirus minor capsid protein p17 family. In terms of assembly, interacts with the minor capsid protein M1249L and with the hexon capsid protein p72 capsomers; these interactions form a rigid zipper structure that stabilizes the capsomers. Interacts with host STING1.

Its subcellular location is the virion membrane. The protein resides in the host endoplasmic reticulum membrane. Its function is as follows. Together with the penton and the other minor capsid proteins (M1249L, p49), forms a complicated network immediately below the outer capsid shell, stabilizing the whole capsid. Three copies of p17 encircle each p72 capsomer in the inner capsid shell, anchoring p72 capsomers on the inner membrane. Required for the assembly of the capsid and icosahedral morphogenesis. Additionally, inhibits the host cGAS-STING pathway through its interaction with STING1 and subsequent interference of the recruitment of downstream components TBK1 and IKBKE. In African swine fever virus (isolate Warthog/Namibia/Wart80/1980) (ASFV), this protein is Minor capsid protein p17.